The chain runs to 397 residues: Elongation factor Tu (397 aa).

One can recognise a tr-type G domain in the interval 10–207; it reads LPHVNVGTIG…TLDAYIPEPV (198 aa). Residues 19 to 26 are G1; it reads GHVDHGKT. 19-26 is a GTP binding site; it reads GHVDHGKT. Thr-26 is a binding site for Mg(2+). The segment at 60 to 64 is G2; it reads GITIN. The G3 stretch occupies residues 81–84; the sequence is DCPG. GTP is bound by residues 81 to 85 and 136 to 139; these read DCPGH and NKAD. Positions 136-139 are G4; that stretch reads NKAD. Residues 174 to 176 are G5; the sequence is SAR.

The protein belongs to the TRAFAC class translation factor GTPase superfamily. Classic translation factor GTPase family. EF-Tu/EF-1A subfamily. In terms of assembly, monomer.

It localises to the cytoplasm. The enzyme catalyses GTP + H2O = GDP + phosphate + H(+). In terms of biological role, GTP hydrolase that promotes the GTP-dependent binding of aminoacyl-tRNA to the A-site of ribosomes during protein biosynthesis. The sequence is that of Elongation factor Tu from Pseudomonas entomophila (strain L48).